A 41-amino-acid polypeptide reads, in one-letter code: Minor histocompatibility protein HB-1 (41 aa).

The loss of recognition by cytotoxic T lymphocyte (CTL) stretch occupies residues 9-17 (EEKRGSLHV).

In terms of assembly, HB-1 forms a complex with MHC class I HLA-B44. In terms of tissue distribution, expressed in acute lymphoblastic leukemia B-cells and Epstein-Barr virus-transformed B-cells.

Functionally, precursor of the histocomplatibility antigen HB-1. More generally, minor histocomplatibility antigens (mHags) refer to immunogenic peptide which, when complexed with MHC, can generate an immune response after recognition by specific T-cells. The peptides are derived from polymorphic intracellular proteins, which are cleaved by normal pathways of antigen processing. The binding of these peptides to MHC class I or class II molecules and its expression on the cell surface can stimulate T-cell responses and thereby trigger graft rejection or graft-versus-host disease (GVHD) after hematopoietic stem cell transplantation from HLA-identical sibling donor. GVHD is a frequent complication after bone marrow transplantation (BMT), due to mismatch of minor histocomplatibility antigen in HLA-matched sibling marrow transplants. HB-1 is presented on the cell surface by MHC class I HLA-B44. This complex specifically elicits donor-cytotoxic T lymphocyte (CTL) reactivity in B-cell acute lymphoblastic leukemia (B-ALL) after treatment by HLA-identical allogenic bone marrow transplantation (BMT). It induces cell recognition and lysis by CTL. However, HB-1 restricted expression in B-ALL cells and not in normal tissues may allow a specific CTL reactivity against B-ALL without the risk of evoking graft-versus-host disease. In Homo sapiens (Human), this protein is Minor histocompatibility protein HB-1 (HMHB1).